A 486-amino-acid polypeptide reads, in one-letter code: Malonate-semialdehyde dehydrogenase (486 aa).

The NAD(+) site is built by Phe154, Lys178, Glu181, Arg182, and Ser231. The Nucleophile role is filled by Cys286. Position 386 (Glu386) interacts with NAD(+).

Belongs to the aldehyde dehydrogenase family. IolA subfamily. As to quaternary structure, homotetramer.

The enzyme catalyses 3-oxopropanoate + NAD(+) + CoA + H2O = hydrogencarbonate + acetyl-CoA + NADH + H(+). The catalysed reaction is 2-methyl-3-oxopropanoate + NAD(+) + CoA + H2O = propanoyl-CoA + hydrogencarbonate + NADH + H(+). The protein operates within polyol metabolism; myo-inositol degradation into acetyl-CoA; acetyl-CoA from myo-inositol: step 7/7. Its function is as follows. Catalyzes the oxidation of malonate semialdehyde (MSA) and methylmalonate semialdehyde (MMSA) into acetyl-CoA and propanoyl-CoA, respectively. Is involved in a myo-inositol catabolic pathway. Bicarbonate, and not CO2, is the end-product of the enzymatic reaction. The polypeptide is Malonate-semialdehyde dehydrogenase (Bacillus cereus (strain ATCC 10987 / NRS 248)).